A 129-amino-acid chain; its full sequence is Small ribosomal subunit protein uS11c (129 aa).

It belongs to the universal ribosomal protein uS11 family. In terms of assembly, part of the 30S ribosomal subunit.

The protein localises to the plastid. It localises to the chloroplast. In Oltmannsiellopsis viridis (Marine flagellate), this protein is Small ribosomal subunit protein uS11c.